Consider the following 318-residue polypeptide: Strigolactone esterase D14 (318 aa).

Pro residues predominate over residues 1-11 (MLRSTHPPPSS). Positions 1 to 48 (MLRSTHPPPSSPSSSSSGGGGGGGSSASSSSEKTMVGGGGGGGGGSGS) are disordered. A compositionally biased stretch (gly residues) spans 36–47 (VGGGGGGGGGSG). The active-site Nucleophile is the S147. Residues S147 and C241 each contribute to the substrate site. Residues D268 and H297 contribute to the active site. H297 is a substrate binding site.

This sequence belongs to the AB hydrolase superfamily. As to quaternary structure, interacts with D53. The interaction between D53 and D14 is enhanced in the presence of strigolactones. The interaction with D53 occurs in the presence of (2'R) stereoisomers of strigolactones, but not (2'S) stereoisomers. Interacts with SLR1 in a strigolactone-dependent manner. Interacts with D3 in a strigolactone-dependent manner. Expressed in the parenchyma cells of the root stele and lateral roots, vascular tissues of vein and leaf sheath, ligule base, auricle base and stem base.

Its subcellular location is the cytoplasm. The protein localises to the nucleus. Its function is as follows. Involved in strigolactone (SL) signaling pathway. May function downstream of SL synthesis, as a component of hormone signaling or as an enzyme that participates in the conversion of SL to the bioactive form. Strigolactones are hormones that inhibit tillering and shoot branching through the MAX-dependent pathway, contribute to the regulation of shoot architectural response to phosphate-limiting conditions and function as rhizosphere signal that stimulates hyphal branching of arbuscular mycorrhizal fungi and trigger seed germination of root parasitic weeds. Strigolactone-dependent association of D14 with D3 and D53 (a repressor of SL signaling) triggers D53 ubiquitination and degradation. Hydrolyzes the butenolide ring of SLs. A reaction product D-OH is trapped in the cavity of D14, inducing the interaction with SLR1, and probably with other proteins such as D3 and D53. Contributes to the negative regulation of gibberellin signaling. The polypeptide is Strigolactone esterase D14 (Oryza sativa subsp. japonica (Rice)).